An 819-amino-acid polypeptide reads, in one-letter code: Protein O-mannosyl-transferase tmem260 (819 aa).

Residues 1–10 (MNNSPTLSNT) are compositionally biased toward polar residues. Positions 1-68 (MNNSPTLSNT…NNNNNIINVN (68 aa)) are disordered. The span at 15–68 (NNNNNSNSNSNSNNNNNNNNNNNNNSNNNNNNNNNVNRNVNNRNNNNNNIINVN) shows a compositional bias: low complexity. N-linked (GlcNAc...) asparagine glycosylation is found at Asn18, Asn38, and Asn70. The next 7 membrane-spanning stretches (helical) occupy residues 113–133 (IACIVLLFISCTIIYSMTQYP), 152–172 (VAHPPGYPLFTFLGYIFSHII), 185–205 (FMSSMIGSIASIFIYLTVYLW), 210–230 (WCGLLSAYMFTFSPLIWMYQI), 232–252 (GEVFSMNNMFVAMLMFLGVWY), 285–305 (LTNQHTLVLIVIPFAFWLMFI), and 316–336 (ILSNLVFYTLIGLSPYLLLFI). N-linked (GlcNAc...) asparagine glycosylation is present at Asn349. 4 consecutive transmembrane segments (helical) span residues 391–411 (LIIQFGYIGLALSLIGLLNLL), 427–447 (MIIFSFLFYITFFFNLCNLPI), 459–479 (FFMQPNVIISITMGLGIKSIF), and 505–525 (YLLPIIIILLVGNQIGFNYNL). 4 N-linked (GlcNAc...) asparagine glycosylation sites follow: Asn531, Asn686, Asn693, and Asn783.

This sequence belongs to the glycosyltransferase 117 (GT117) family.

It localises to the endoplasmic reticulum membrane. It catalyses the reaction a di-trans,poly-cis-dolichyl beta-D-mannosyl phosphate + L-seryl-[protein] = 3-O-(alpha-D-mannosyl)-L-seryl-[protein] + a di-trans,poly-cis-dolichyl phosphate + H(+). It carries out the reaction a di-trans,poly-cis-dolichyl beta-D-mannosyl phosphate + L-threonyl-[protein] = 3-O-(alpha-D-mannosyl)-L-threonyl-[protein] + a di-trans,poly-cis-dolichyl phosphate + H(+). Functionally, O-mannosyl-transferase that transfers mannosyl residues to the hydroxyl group of serine or threonine residues of proteins. This chain is Protein O-mannosyl-transferase tmem260, found in Dictyostelium discoideum (Social amoeba).